The chain runs to 123 residues: Ribosome-binding factor A (123 aa).

This sequence belongs to the RbfA family. As to quaternary structure, monomer. Binds 30S ribosomal subunits, but not 50S ribosomal subunits or 70S ribosomes.

It is found in the cytoplasm. Functionally, one of several proteins that assist in the late maturation steps of the functional core of the 30S ribosomal subunit. Associates with free 30S ribosomal subunits (but not with 30S subunits that are part of 70S ribosomes or polysomes). Required for efficient processing of 16S rRNA. May interact with the 5'-terminal helix region of 16S rRNA. The chain is Ribosome-binding factor A from Acetivibrio thermocellus (strain ATCC 27405 / DSM 1237 / JCM 9322 / NBRC 103400 / NCIMB 10682 / NRRL B-4536 / VPI 7372) (Clostridium thermocellum).